A 368-amino-acid chain; its full sequence is Spermidine/putrescine import ATP-binding protein PotA (368 aa).

In terms of domain architecture, ABC transporter spans Val6–Ile236. Gly38–Thr45 is an ATP binding site.

The protein belongs to the ABC transporter superfamily. Spermidine/putrescine importer (TC 3.A.1.11.1) family. The complex is composed of two ATP-binding proteins (PotA), two transmembrane proteins (PotB and PotC) and a solute-binding protein (PotD).

It is found in the cell inner membrane. The enzyme catalyses ATP + H2O + polyamine-[polyamine-binding protein]Side 1 = ADP + phosphate + polyamineSide 2 + [polyamine-binding protein]Side 1.. Its function is as follows. Part of the ABC transporter complex PotABCD involved in spermidine/putrescine import. Responsible for energy coupling to the transport system. This chain is Spermidine/putrescine import ATP-binding protein PotA, found in Thermotoga maritima (strain ATCC 43589 / DSM 3109 / JCM 10099 / NBRC 100826 / MSB8).